A 108-amino-acid chain; its full sequence is MSETFTEISPHQAWELIENEGATLADIRDGHRYAYSHPQDAFHLTNESYGRFLDEVDYEEPVIVMCYHGVSSRNTAQFLVEQGFDRVYSVKGGFDGWERSGLPIETAY.

The Rhodanese domain occupies 18 to 106 (ENEGATLADI…WERSGLPIET (89 aa)). Cysteine 66 acts as the Cysteine persulfide intermediate in catalysis.

The protein belongs to the GlpE family.

The protein localises to the cytoplasm. It carries out the reaction thiosulfate + hydrogen cyanide = thiocyanate + sulfite + 2 H(+). The enzyme catalyses thiosulfate + [thioredoxin]-dithiol = [thioredoxin]-disulfide + hydrogen sulfide + sulfite + 2 H(+). Transferase that catalyzes the transfer of sulfur from thiosulfate to thiophilic acceptors such as cyanide or dithiols. May function in a CysM-independent thiosulfate assimilation pathway by catalyzing the conversion of thiosulfate to sulfite, which can then be used for L-cysteine biosynthesis. This is Thiosulfate sulfurtransferase GlpE from Actinobacillus pleuropneumoniae serotype 7 (strain AP76).